The following is a 276-amino-acid chain: Type II pantothenate kinase (276 aa).

8-15 (DAGGTLTK) contacts ATP. The active-site Proton acceptor is E76. ATP-binding positions include T105, 127–131 (GGTIM), F143, and S230.

This sequence belongs to the type II pantothenate kinase family. In terms of assembly, homodimer.

It is found in the cytoplasm. The enzyme catalyses (R)-pantothenate + ATP = (R)-4'-phosphopantothenate + ADP + H(+). Its pathway is cofactor biosynthesis; coenzyme A biosynthesis; CoA from (R)-pantothenate: step 1/5. Catalyzes the phosphorylation of pantothenate (Pan), the first step in CoA biosynthesis. The sequence is that of Type II pantothenate kinase from Bacillus cereus (strain AH820).